We begin with the raw amino-acid sequence, 472 residues long: Glutamate synthase [NADPH] small chain (472 aa).

Positions 41-72 (QDAAAQAHRCLHCGNPYCEWKCPVHNYIPNWL) constitute a 4Fe-4S ferredoxin-type domain. The [4Fe-4S] cluster site is built by Cys-50, Cys-53, Cys-58, and Cys-62.

The cofactor is [4Fe-4S] cluster.

It catalyses the reaction 2 L-glutamate + NADP(+) = L-glutamine + 2-oxoglutarate + NADPH + H(+). It participates in amino-acid biosynthesis; L-glutamate biosynthesis via GLT pathway; L-glutamate from 2-oxoglutarate and L-glutamine (NADP(+) route): step 1/1. Its pathway is energy metabolism; nitrogen metabolism. Functionally, catalyzes the conversion of L-glutamine and 2-oxoglutarate into two molecules of L-glutamate. The protein is Glutamate synthase [NADPH] small chain of Halomonas elongata (strain ATCC 33173 / DSM 2581 / NBRC 15536 / NCIMB 2198 / 1H9).